The sequence spans 193 residues: Ion-translocating oxidoreductase complex subunit A (193 aa).

6 helical membrane passes run L5–L25, I39–M59, F62–A82, L102–L122, A134–I154, and S171–V191.

The protein belongs to the NqrDE/RnfAE family. As to quaternary structure, the complex is composed of six subunits: RnfA, RnfB, RnfC, RnfD, RnfE and RnfG.

Its subcellular location is the cell inner membrane. Part of a membrane-bound complex that couples electron transfer with translocation of ions across the membrane. The protein is Ion-translocating oxidoreductase complex subunit A of Proteus mirabilis (strain HI4320).